A 171-amino-acid polypeptide reads, in one-letter code: uncharacterized protein (171 aa).

Positions 1 to 20 (MRRVLFSCFCGLLWSSSGWA) are cleaved as a signal peptide. The cysteines at positions 40 and 80 are disulfide-linked.

It belongs to the fimbrial protein family.

The protein localises to the fimbrium. Functionally, part of the sfmACDHF fimbrial operon. Could contribute to adhesion to various surfaces in specific environmental niches. Increases adhesion to eukaryotic T24 bladder epithelial cells in the absence of fim genes. This is an uncharacterized protein from Escherichia coli (strain K12).